Reading from the N-terminus, the 267-residue chain is tRNA pseudouridine synthase A (267 aa).

The active-site Nucleophile is Asp-51. Residue Tyr-109 participates in substrate binding.

It belongs to the tRNA pseudouridine synthase TruA family. Homodimer.

It carries out the reaction uridine(38/39/40) in tRNA = pseudouridine(38/39/40) in tRNA. Formation of pseudouridine at positions 38, 39 and 40 in the anticodon stem and loop of transfer RNAs. In Staphylococcus carnosus (strain TM300), this protein is tRNA pseudouridine synthase A.